The primary structure comprises 971 residues: Sodium/calcium exchanger 1 (971 aa).

The N-terminal stretch at 1-32 is a signal peptide; sequence MLRLSLPPNVSMGFRLVTLVALLFTHVDHITA. The Extracellular portion of the chain corresponds to 33-71; sequence DTEAETGGNETTECTGSYYCKKGVILPIWEPQDPSFGDK. N-linked (GlcNAc...) asparagine glycosylation occurs at N41. The helical transmembrane segment at 72 to 92 threads the bilayer; the sequence is IARATVYFVAMVYMFLGVSII. Residues 93 to 133 lie on the Cytoplasmic side of the membrane; that stretch reads ADRFMSSIEVITSQEKEITIKKPNGETTKTTVRIWNETVSN. Residues 134–154 form a helical membrane-spanning segment; it reads LTLMALGSSAPEILLSVIEVC. An Alpha-1 repeat occupies 138 to 178; sequence ALGSSAPEILLSVIEVCGHNFTAGDLGPSTIVGSAAFNMFI. Topologically, residues 155–167 are extracellular; the sequence is GHNFTAGDLGPST. N157 is a glycosylation site (N-linked (GlcNAc...) asparagine). Residues 168-188 traverse the membrane as a helical segment; it reads IVGSAAFNMFIIIALCVYVVP. At 189 to 201 the chain is on the cytoplasmic side; sequence DGETRKIKHLRVF. The chain crosses the membrane as a helical span at residues 202-222; it reads FVTAAWSIFAYTWLYIILSVS. The Extracellular segment spans residues 223 to 228; that stretch reads SPGVVE. The chain crosses the membrane as a helical span at residues 229–249; it reads VWEGLLTFFFFPICVVFAWVA. Residues 250-798 lie on the Cytoplasmic side of the membrane; sequence DRRLLFYKYV…FVPPTEYWNG (549 aa). The putative calmodulin-binding region stretch occupies residues 251–270; that stretch reads RRLLFYKYVYKRYRAGKQRG. Phosphoserine is present on residues S282 and S389. 2 consecutive Calx-beta domains span residues 393-493 and 524-624; these read VNMD…VHLS and ATIT…IEIG. E417, D453, D478, D479, I481, E483, E486, D530, D531, D532, E548, D584, D610, E611, E612, and E716 together coordinate Ca(2+). Residues 799 to 819 traverse the membrane as a helical segment; sequence WACFIVSILMIGLLTAFIGDL. Residues 820–822 are Extracellular-facing; it reads ASH. Residues 823 to 843 traverse the membrane as a helical segment; sequence FGCTIGLKDSVTAVVFVALGT. The stretch at 840 to 876 is one Alpha-2 repeat; that stretch reads ALGTSVPDTFASKVAATQDQYADASIGNVTGSNAVNV. The Cytoplasmic segment spans residues 844–872; it reads SVPDTFASKVAATQDQYADASIGNVTGSN. Residues 873–893 form a helical membrane-spanning segment; that stretch reads AVNVFLGIGVAWSIAAIYHAA. Topologically, residues 894–904 are extracellular; that stretch reads NGEQFKVSPGT. A helical transmembrane segment spans residues 905 to 925; that stretch reads LAFSVTLFTIFAFINVGVLLY. Topologically, residues 926-942 are cytoplasmic; that stretch reads RRRPEIGGELGGPRTAK. A helical transmembrane segment spans residues 943–963; sequence LLTSSLFVLLWLLYIFFSSLE. Over 964–971 the chain is Extracellular; that stretch reads AYCHIKGF.

Belongs to the Ca(2+):cation antiporter (CaCA) (TC 2.A.19) family. SLC8 subfamily. As to expression, detected in heart, brain cortex and hippocampus (at protein level). Cardiac sarcolemma or brain, and spleen. Expressed in all regions of the kidney, highest levels of expression in the distal convoluted tubule. Expressed throughout the CNS, in decreasing order of abundance in hippocampus, cortex, cerebellum, hypothalamus, midbrain and striatum. Expressed in numerous regions of the brain including multiple cortical layers, hippocampus, septal nuclei, thalamic nuclei, cerebellum, hypothalamus, olfactory bulb and brainstem. Also expressed in various regions of the spinal cord, ventricles and atria of the heart, lung, adrenals and kidney. Isoform 4 seems to be a predominant isoform in aorta, stomach, liver, and kidney.

It is found in the cell membrane. The protein resides in the cell projection. The protein localises to the dendrite. It carries out the reaction Ca(2+)(in) + 3 Na(+)(out) = Ca(2+)(out) + 3 Na(+)(in). Its activity is regulated as follows. Activated by micromolar levels of Ca(2+). With respect to regulation, only active at low calcium concentrations. Not activated by PKC. Active at all calcium levels tested. Activated by PKC. Its activity is regulated as follows. Only active at low calcium concentrations. Activated by PKC. Its function is as follows. Mediates the exchange of one Ca(2+) ion against three to four Na(+) ions across the cell membrane, and thereby contributes to the regulation of cytoplasmic Ca(2+) levels and Ca(2+)-dependent cellular processes. Contributes to Ca(2+) transport during excitation-contraction coupling in muscle. In a first phase, voltage-gated channels mediate the rapid increase of cytoplasmic Ca(2+) levels due to release of Ca(2+) stores from the endoplasmic reticulum. SLC8A1 mediates the export of Ca(2+) from the cell during the next phase, so that cytoplasmic Ca(2+) levels rapidly return to baseline. Required for normal embryonic heart development and the onset of heart contractions. This chain is Sodium/calcium exchanger 1 (Slc8a1), found in Rattus norvegicus (Rat).